A 470-amino-acid chain; its full sequence is MDRISNLPNEIICHIVSFLSAKEAAFASVLSKRWQNLFTIVQKLEFDDSVKNQGSLMDFVNGVLALPVTTRISKFSLRFDSFLKRKLETGLVIGPHVVNRCLCNVLKRGVLDLKLEIYGEDGYLLPSEVFTCKTIVDLKLTSCIFAESYVIDVIPENAFLPGLESLFLKSIWFSDLRGCAFQTLLSACPVLKTLTIYDVQWEKWKWSRTVSSATLERLIIQRTEFTYFNGSDFKSITFDTPSLTYLKYIDFVPEEYPVVNLDSIVEAKLHLILTGNQDYPVRYLGREDDPITSNPTNLIKGLRNVEILHLSTATAQMLCFFPRETLPEFVNLHHLTIGPTYYECFNWRLLPILLKKTPNLKTLMIKGPLHLYYRDFNDDEEEEEPEYYCECSSGCNCLLSCHMEVLEISHYRGTTKELEKLKHFLGKLSCLEHVKLGVWASSDKEKLSITTDLLMLPRASVNCKIQINFS.

The 53-residue stretch at M1 to Q53 folds into the F-box domain. 6 LRR repeats span residues K114–S142, C143–S170, F173–D198, F225–D250, E287–T312, and Y342–G367.

The chain is Putative F-box/LRR-repeat protein At3g58920 from Arabidopsis thaliana (Mouse-ear cress).